A 387-amino-acid chain; its full sequence is Galactokinase (387 aa).

33-36 (EHID) provides a ligand contact to substrate. Residues Ser67 and 124–130 (GAGLSSS) each bind ATP. Mg(2+) contacts are provided by Ser130 and Glu162. Asp174 serves as the catalytic Proton acceptor. Tyr224 contacts substrate.

It belongs to the GHMP kinase family. GalK subfamily.

It is found in the cytoplasm. The catalysed reaction is alpha-D-galactose + ATP = alpha-D-galactose 1-phosphate + ADP + H(+). The protein operates within carbohydrate metabolism; galactose metabolism. Its function is as follows. Catalyzes the transfer of the gamma-phosphate of ATP to D-galactose to form alpha-D-galactose-1-phosphate (Gal-1-P). This is Galactokinase from Clostridium perfringens (strain 13 / Type A).